The following is a 440-amino-acid chain: Xylose isomerase (440 aa).

Catalysis depends on residues His-101 and Asp-104. Mg(2+) contacts are provided by Glu-232, Glu-268, His-271, Asp-296, Asp-307, Asp-309, and Asp-339.

It belongs to the xylose isomerase family. Homotetramer. It depends on Mg(2+) as a cofactor.

The protein resides in the cytoplasm. It catalyses the reaction alpha-D-xylose = alpha-D-xylulofuranose. The protein is Xylose isomerase of Escherichia coli (strain SE11).